Reading from the N-terminus, the 119-residue chain is Large ribosomal subunit protein uL14 (119 aa).

Belongs to the universal ribosomal protein uL14 family. In terms of assembly, part of the 50S ribosomal subunit. Forms a cluster with proteins L3 and L19. In the 70S ribosome, L14 and L19 interact and together make contacts with the 16S rRNA in bridges B5 and B8.

Functionally, binds to 23S rRNA. Forms part of two intersubunit bridges in the 70S ribosome. The chain is Large ribosomal subunit protein uL14 from Wolbachia pipientis wMel.